We begin with the raw amino-acid sequence, 290 residues long: Acetylglutamate kinase (290 aa).

Residues 72-73 (GG), arginine 94, and asparagine 187 each bind substrate.

It belongs to the acetylglutamate kinase family. ArgB subfamily.

Its subcellular location is the plastid. The protein resides in the chloroplast. It catalyses the reaction N-acetyl-L-glutamate + ATP = N-acetyl-L-glutamyl 5-phosphate + ADP. It functions in the pathway amino-acid biosynthesis; L-arginine biosynthesis; N(2)-acetyl-L-ornithine from L-glutamate: step 2/4. Catalyzes the ATP-dependent phosphorylation of N-acetyl-L-glutamate. This Cyanidioschyzon merolae (strain NIES-3377 / 10D) (Unicellular red alga) protein is Acetylglutamate kinase.